The primary structure comprises 450 residues: 3-phosphoshikimate 1-carboxyvinyltransferase (450 aa).

K23, S24, and R28 together coordinate 3-phosphoshikimate. Residue K23 participates in phosphoenolpyruvate binding. G96 and R124 together coordinate phosphoenolpyruvate. S167, S168, Q169, S196, E311, and H340 together coordinate 3-phosphoshikimate. Phosphoenolpyruvate is bound at residue Q169. E311 functions as the Proton acceptor in the catalytic mechanism. Phosphoenolpyruvate-binding residues include R344, R385, and K410. A disordered region spans residues 426–450 (GQGWGYPQPRSGQRARRATGQGSGG).

The protein belongs to the EPSP synthase family. In terms of assembly, monomer.

It is found in the cytoplasm. It catalyses the reaction 3-phosphoshikimate + phosphoenolpyruvate = 5-O-(1-carboxyvinyl)-3-phosphoshikimate + phosphate. It participates in metabolic intermediate biosynthesis; chorismate biosynthesis; chorismate from D-erythrose 4-phosphate and phosphoenolpyruvate: step 6/7. In terms of biological role, catalyzes the transfer of the enolpyruvyl moiety of phosphoenolpyruvate (PEP) to the 5-hydroxyl of shikimate-3-phosphate (S3P) to produce enolpyruvyl shikimate-3-phosphate and inorganic phosphate. The chain is 3-phosphoshikimate 1-carboxyvinyltransferase from Mycobacterium bovis (strain ATCC BAA-935 / AF2122/97).